The primary structure comprises 310 residues: Oxygen-dependent coproporphyrinogen-III oxidase (310 aa).

Serine 97 serves as a coordination point for substrate. A divalent metal cation-binding residues include histidine 101 and histidine 111. Histidine 111 serves as the catalytic Proton donor. 113–115 contacts substrate; it reads NFR. A divalent metal cation contacts are provided by histidine 150 and histidine 180. Positions 245-280 are important for dimerization; the sequence is YVEFNLLYDRGTRFGLEFGGRTESILMSLPPRVVWR. 263–265 contributes to the substrate binding site; it reads GGR.

It belongs to the aerobic coproporphyrinogen-III oxidase family. In terms of assembly, homodimer. A divalent metal cation serves as cofactor.

It is found in the cytoplasm. The enzyme catalyses coproporphyrinogen III + O2 + 2 H(+) = protoporphyrinogen IX + 2 CO2 + 2 H2O. It participates in porphyrin-containing compound metabolism; protoporphyrin-IX biosynthesis; protoporphyrinogen-IX from coproporphyrinogen-III (O2 route): step 1/1. Functionally, involved in the heme biosynthesis. Catalyzes the aerobic oxidative decarboxylation of propionate groups of rings A and B of coproporphyrinogen-III to yield the vinyl groups in protoporphyrinogen-IX. The protein is Oxygen-dependent coproporphyrinogen-III oxidase of Coxiella burnetii (strain RSA 493 / Nine Mile phase I).